Here is a 149-residue protein sequence, read N- to C-terminus: Cyanate hydratase (149 aa).

Active-site residues include Arg-90, Glu-93, and Ser-116.

The protein belongs to the cyanase family.

It carries out the reaction cyanate + hydrogencarbonate + 3 H(+) = NH4(+) + 2 CO2. Catalyzes the reaction of cyanate with bicarbonate to produce ammonia and carbon dioxide. This is Cyanate hydratase from Aquifex aeolicus (strain VF5).